Here is a 140-residue protein sequence, read N- to C-terminus: Arsenate reductase ArsI2 (140 aa).

Residue C10 is the Nucleophile; cysteine thioarsenate intermediate of the active site.

Belongs to the ArsC family.

It catalyses the reaction [glutaredoxin]-dithiol + arsenate + glutathione + H(+) = glutathionyl-S-S-[glutaredoxin] + arsenite + H2O. Catalyzes the reduction of arsenate [As(V)] to arsenite [As(III)]. Does not constitute the major arsenate reductase in cells: essential only in the absence of ArsC (AC P74313). The polypeptide is Arsenate reductase ArsI2 (Synechocystis sp. (strain ATCC 27184 / PCC 6803 / Kazusa)).